The sequence spans 322 residues: ATP-dependent 6-phosphofructokinase 1 (322 aa).

Residue glycine 11 coordinates ATP. ADP is bound at residue 21 to 25 (RAVVR). ATP-binding positions include 72 to 73 (RS) and 102 to 105 (GDGT). Aspartate 103 lines the Mg(2+) pocket. 126–128 (TID) lines the substrate pocket. Aspartate 128 serves as the catalytic Proton acceptor. Residue arginine 155 coordinates ADP. Residues arginine 163 and 170-172 (MGR) each bind substrate. ADP contacts are provided by residues 186-188 (GAE), arginine 212, and 214-216 (KKS). Substrate-binding positions include glutamate 223, arginine 246, and 252-255 (HIQR).

Belongs to the phosphofructokinase type A (PFKA) family. ATP-dependent PFK group I subfamily. Prokaryotic clade 'B1' sub-subfamily. Homotetramer. It depends on Mg(2+) as a cofactor.

The protein localises to the cytoplasm. The catalysed reaction is beta-D-fructose 6-phosphate + ATP = beta-D-fructose 1,6-bisphosphate + ADP + H(+). Its pathway is carbohydrate degradation; glycolysis; D-glyceraldehyde 3-phosphate and glycerone phosphate from D-glucose: step 3/4. With respect to regulation, allosterically activated by ADP and other diphosphonucleosides. Allosterically inhibited by phosphoenolpyruvate which induces the dissociation of the active tetramer into an inactive two-subunit forms. Catalyzes the phosphorylation of D-fructose 6-phosphate to fructose 1,6-bisphosphate by ATP, the first committing step of glycolysis. The sequence is that of ATP-dependent 6-phosphofructokinase 1 from Thermus thermophilus (strain ATCC 27634 / DSM 579 / HB8).